The chain runs to 459 residues: MSVLLFGVSHRSAPVSVLEQLSIDESDHGKIVDRVLQSPLVTEAMVLSTCNRVEVYAVVDAFHGGLAVIGQVLSDHSGMSMSDLTKYAYVRYSEAAVEHLFAVASGLDSAVIGEQQVLGQVRRAYATAETNRTVGRVLHELAQRALSVGKRVHSETAIDAAGASVVSVALDMADRRLGGLAGKTAVLVGAGAMGALAAAHLSRAGIGQVHVLNRSLSRAQRLVRKIRETGVRADALPLEHLADALAGADVVVSCTGAVSPVVSLADVHHALAAAGRSAADETAHPLVICDLGMPRDVDPAVAGLPGVWVVDVDRVQHEPSAHAAAADVDAARTIVATEVAAYLAGQRMAEVTPTVTALRQRAADVVEAELLRLDNRLPGLDSAHREEVARTVRRVVDKLLHAPTVRIKQLASAPGGDSYAEALRELFELDQTAVDAVAAGELPVIATGFDAGAPQQPTE.

Residues 49–52 (TCNR), Ser109, 114–116 (EQQ), and Gln120 contribute to the substrate site. Cys50 (nucleophile) is an active-site residue. 189 to 194 (GAGAMG) is a binding site for NADP(+).

It belongs to the glutamyl-tRNA reductase family. As to quaternary structure, homodimer.

It catalyses the reaction (S)-4-amino-5-oxopentanoate + tRNA(Glu) + NADP(+) = L-glutamyl-tRNA(Glu) + NADPH + H(+). The protein operates within porphyrin-containing compound metabolism; protoporphyrin-IX biosynthesis; 5-aminolevulinate from L-glutamyl-tRNA(Glu): step 1/2. Catalyzes the NADPH-dependent reduction of glutamyl-tRNA(Glu) to glutamate 1-semialdehyde (GSA). This is Glutamyl-tRNA reductase from Mycolicibacterium paratuberculosis (strain ATCC BAA-968 / K-10) (Mycobacterium paratuberculosis).